A 584-amino-acid chain; its full sequence is MGNQMSVPQRVEDQENEPEAETYQDNASALNGVPVVVSTHTVQHLEEVDLGISVKTDNVATSSPETTEISAVADANGKNLGKEAKPEAPAAKSRFFLMLSRPVPGRTGDQAADSSLGSVKLDVSSNKAPANKDPSESWTLPVAAGPGQDTDKTPGHAPAQDKVLSAARDPTLLPPETGGAGGEAPSKPKDSSFFDKFFKLDKGQEKVPGDSQQEAKRAEHQDKVDEVPGLSGQSDDVPAGKDIVDGKEKEGQELGTADCSVPGDPEGLETAKDDSQAAAIAENNNSIMSFFKTLVSPNKAETKKDPEDTGAEKSPTTSADLKSDKANFTSQETQGAGKNSKGCNPSGHTQSVTTPEPAKEGTKEKSGPTSLPLGKLFWKKSVKEDSVPTGAEENVVCESPVEIIKSKEVESALQTVDLNEGDAAPEPTEAKLKREESKPRTSLMAFLRQMSVKGDGGITHSEEINGKDSSCQTSDSTEKTITPPEPEPTGAPQKGKEGSSKDKKSAAEMNKQKSNKQEAKEPAQCTEQATVDTNSLQNGDKLQKRPEKRQQSLGGFFKGLGPKRMLDAQVQTDPVSIGPVGKSK.

Disordered regions lie at residues 1–29 (MGNQ…NASA), 59–280 (VATS…AAAI), and 297–377 (PNKA…GKLF). 2 stretches are compositionally biased toward polar residues: residues 59–69 (VATSSPETTEI) and 112–128 (ADSS…SNKA). Phosphoserine is present on residues Ser-124 and Ser-192. 3 stretches are compositionally biased toward basic and acidic residues: residues 186-226 (SKPK…KVDE), 238-252 (PAGK…KEGQ), and 300-311 (AETKKDPEDTGA). Ser-314 carries the post-translational modification Phosphoserine. Over residues 314 to 354 (SPTTSADLKSDKANFTSQETQGAGKNSKGCNPSGHTQSVTT) the composition is skewed to polar residues. Residues 357-366 (PAKEGTKEKS) show a composition bias toward basic and acidic residues. Ser-381 and Ser-399 each carry phosphoserine. The tract at residues 415–584 (TVDLNEGDAA…VSIGPVGKSK (170 aa)) is disordered. Residues 428 to 439 (TEAKLKREESKP) are compositionally biased toward basic and acidic residues. Thr-480 carries the phosphothreonine modification. Positions 494–506 (KGKEGSSKDKKSA) are enriched in basic and acidic residues. A compositionally biased stretch (polar residues) spans 525–540 (CTEQATVDTNSLQNGD). Residues 541 to 550 (KLQKRPEKRQ) show a composition bias toward basic and acidic residues. Ser-552 carries the post-translational modification Phosphoserine. Positions 565 to 584 (MLDAQVQTDPVSIGPVGKSK) are interacts with DYNLL1 and DYNLL2.

In terms of assembly, homodimer. Interacts with DYNLL1 and DYNLL2. As to expression, highly expressed in the brain and, more specifically, in oligodendrocytes (at protein level). Expressed in the prostate, and at lower levels in testis, intestine and colon. Overexpressed in most breast cancer cell lines and down-regulated in some colorectal tumors.

The protein resides in the cytoplasm. In terms of biological role, required for myelination. This is Breast carcinoma-amplified sequence 1 (BCAS1) from Homo sapiens (Human).